Here is a 387-residue protein sequence, read N- to C-terminus: Cysteine desulfurase IscS (387 aa).

Pyridoxal 5'-phosphate-binding positions include 73-74 (AT), asparagine 155, glutamine 183, and 203-205 (SAH). The residue at position 206 (lysine 206) is an N6-(pyridoxal phosphate)lysine. Pyridoxal 5'-phosphate is bound at residue threonine 241. Cysteine 328 functions as the Cysteine persulfide intermediate in the catalytic mechanism. A [2Fe-2S] cluster-binding site is contributed by cysteine 328.

Belongs to the class-V pyridoxal-phosphate-dependent aminotransferase family. NifS/IscS subfamily. As to quaternary structure, homodimer. Forms a heterotetramer with IscU, interacts with other sulfur acceptors. Pyridoxal 5'-phosphate serves as cofactor.

It localises to the cytoplasm. It catalyses the reaction (sulfur carrier)-H + L-cysteine = (sulfur carrier)-SH + L-alanine. It participates in cofactor biosynthesis; iron-sulfur cluster biosynthesis. Master enzyme that delivers sulfur to a number of partners involved in Fe-S cluster assembly, tRNA modification or cofactor biosynthesis. Catalyzes the removal of elemental sulfur atoms from cysteine to produce alanine. Functions as a sulfur delivery protein for Fe-S cluster synthesis onto IscU, an Fe-S scaffold assembly protein, as well as other S acceptor proteins. In Helicobacter pylori (strain ATCC 700392 / 26695) (Campylobacter pylori), this protein is Cysteine desulfurase IscS.